A 542-amino-acid polypeptide reads, in one-letter code: Ribulokinase 2 (542 aa).

Belongs to the ribulokinase family.

It carries out the reaction D-ribulose + ATP = D-ribulose 5-phosphate + ADP + H(+). The catalysed reaction is L-ribulose + ATP = L-ribulose 5-phosphate + ADP + H(+). The protein operates within carbohydrate degradation; L-arabinose degradation via L-ribulose; D-xylulose 5-phosphate from L-arabinose (bacterial route): step 2/3. This is Ribulokinase 2 from Staphylococcus saprophyticus subsp. saprophyticus (strain ATCC 15305 / DSM 20229 / NCIMB 8711 / NCTC 7292 / S-41).